We begin with the raw amino-acid sequence, 124 residues long: uncharacterized protein (124 aa).

The chain crosses the membrane as a helical span at residues 83–100; it reads VTCFSLYTICYRIVLIWA.

The protein resides in the membrane. This is an uncharacterized protein from Saccharomyces cerevisiae (strain ATCC 204508 / S288c) (Baker's yeast).